Consider the following 339-residue polypeptide: Phosphatidylglycerol--prolipoprotein diacylglyceryl transferase (339 aa).

The next 3 membrane-spanning stretches (helical) occupy residues 43-63 (FTIA…YWLG), 81-101 (ILWM…LTSW), and 121-141 (NGGI…IYFA). Arg167 is a binding site for a 1,2-diacyl-sn-glycero-3-phospho-(1'-sn-glycerol). 2 consecutive transmembrane segments (helical) span residues 231-251 (FTQL…YFWL) and 300-320 (LWTD…WMLW).

Belongs to the Lgt family.

The protein resides in the cell membrane. It catalyses the reaction L-cysteinyl-[prolipoprotein] + a 1,2-diacyl-sn-glycero-3-phospho-(1'-sn-glycerol) = an S-1,2-diacyl-sn-glyceryl-L-cysteinyl-[prolipoprotein] + sn-glycerol 1-phosphate + H(+). Its pathway is protein modification; lipoprotein biosynthesis (diacylglyceryl transfer). In terms of biological role, catalyzes the transfer of the diacylglyceryl group from phosphatidylglycerol to the sulfhydryl group of the N-terminal cysteine of a prolipoprotein, the first step in the formation of mature lipoproteins. This Deinococcus radiodurans (strain ATCC 13939 / DSM 20539 / JCM 16871 / CCUG 27074 / LMG 4051 / NBRC 15346 / NCIMB 9279 / VKM B-1422 / R1) protein is Phosphatidylglycerol--prolipoprotein diacylglyceryl transferase.